Here is a 655-residue protein sequence, read N- to C-terminus: Tetratricopeptide repeat protein 30 homolog (655 aa).

7 TPR repeats span residues 10 to 43 (EGHV…ANTR), 44 to 76 (AGLS…APKE), 143 to 176 (ADTL…GGFN), 178 to 210 (LVAY…GMRN), 385 to 418 (LAAK…YLPV), 450 to 484 (SIWR…HSDD), and 534 to 567 (CIVN…GSGN).

The protein belongs to the TTC30/dfy-1/fleer family.

The protein resides in the cell projection. It localises to the cilium. Functionally, required for polyglutamylation of axonemal tubulin in sensory cilia. Plays a role in anterograde intraflagellar transport (IFT), the process by which cilia precursors are transported from the base of the cilium to the site of their incorporation at the tip. The protein is Tetratricopeptide repeat protein 30 homolog of Drosophila melanogaster (Fruit fly).